A 177-amino-acid polypeptide reads, in one-letter code: Large ribosomal subunit protein uL6 (177 aa).

The protein belongs to the universal ribosomal protein uL6 family. As to quaternary structure, part of the 50S ribosomal subunit.

In terms of biological role, this protein binds to the 23S rRNA, and is important in its secondary structure. It is located near the subunit interface in the base of the L7/L12 stalk, and near the tRNA binding site of the peptidyltransferase center. The chain is Large ribosomal subunit protein uL6 from Rickettsia canadensis (strain McKiel).